We begin with the raw amino-acid sequence, 397 residues long: 1-deoxy-D-xylulose 5-phosphate reductoisomerase (397 aa).

Residues Thr17, Gly18, Ser19, Ile20, Asn47, and Asn130 each contribute to the NADPH site. Lys131 is a binding site for 1-deoxy-D-xylulose 5-phosphate. Glu132 is an NADPH binding site. Residue Asp156 coordinates Mn(2+). Residues Ser157, Glu158, Ser182, and His205 each contribute to the 1-deoxy-D-xylulose 5-phosphate site. Position 158 (Glu158) interacts with Mn(2+). NADPH is bound at residue Gly211. 1-deoxy-D-xylulose 5-phosphate-binding residues include Ser218, Asn223, Lys224, and Glu227. Glu227 is a binding site for Mn(2+).

This sequence belongs to the DXR family. Mg(2+) serves as cofactor. It depends on Mn(2+) as a cofactor.

It carries out the reaction 2-C-methyl-D-erythritol 4-phosphate + NADP(+) = 1-deoxy-D-xylulose 5-phosphate + NADPH + H(+). It functions in the pathway isoprenoid biosynthesis; isopentenyl diphosphate biosynthesis via DXP pathway; isopentenyl diphosphate from 1-deoxy-D-xylulose 5-phosphate: step 1/6. Its function is as follows. Catalyzes the NADPH-dependent rearrangement and reduction of 1-deoxy-D-xylulose-5-phosphate (DXP) to 2-C-methyl-D-erythritol 4-phosphate (MEP). The polypeptide is 1-deoxy-D-xylulose 5-phosphate reductoisomerase (Rhizobium rhizogenes (strain K84 / ATCC BAA-868) (Agrobacterium radiobacter)).